Reading from the N-terminus, the 185-residue chain is Elongation factor P (185 aa).

It belongs to the elongation factor P family.

It localises to the cytoplasm. It functions in the pathway protein biosynthesis; polypeptide chain elongation. Its function is as follows. Involved in peptide bond synthesis. Stimulates efficient translation and peptide-bond synthesis on native or reconstituted 70S ribosomes in vitro. Probably functions indirectly by altering the affinity of the ribosome for aminoacyl-tRNA, thus increasing their reactivity as acceptors for peptidyl transferase. This chain is Elongation factor P, found in Clostridium perfringens (strain ATCC 13124 / DSM 756 / JCM 1290 / NCIMB 6125 / NCTC 8237 / Type A).